The primary structure comprises 239 residues: Serine protease SplD (239 aa).

Positions 1 to 36 (MNKNIIIKSIAALTILTSITGVGTTVVDGIQQTAKA) are cleaved as a signal peptide. Catalysis depends on charge relay system residues histidine 75, aspartate 114, and serine 192.

This sequence belongs to the peptidase S1B family.

It localises to the secreted. This Staphylococcus aureus (strain Mu3 / ATCC 700698) protein is Serine protease SplD (splD).